Consider the following 320-residue polypeptide: MKYLKHLSDAADREAIKALHDERQTWVNQEKKGFLRYREPYLQLARFKADSINLENDVVTIGHGEQISHEEQAEIRQALRAYMPWRKGPFAVFGVDIDAEWRSERKWQRLEKHLPDLKGKVIADIGCNNGYYMFRMAAQEPAFVLGIEPSVQHYYCFKALEEMSGLTNLEIDLLGVEHLPLFTESFDVVFLMGIIYHRSAPIETLRAVLDSLKPGGTLILETQGIPGEQPYALFPDKTYAKVPGTYFVPSASCLINWMHKAGFIDVDLFCDHPMSPEEQRQTEWMEFESYKDFLDPENPELTLEGYPAPHRFFVKATKKM.

Residues Lys87, Trp101, Lys106, Gly126, 148–150 (EPS), 176–177 (VE), Met192, Tyr196, and Arg311 each bind carboxy-S-adenosyl-L-methionine.

This sequence belongs to the class I-like SAM-binding methyltransferase superfamily. CmoB family. As to quaternary structure, homotetramer.

It carries out the reaction carboxy-S-adenosyl-L-methionine + 5-hydroxyuridine(34) in tRNA = 5-carboxymethoxyuridine(34) in tRNA + S-adenosyl-L-homocysteine + H(+). Its function is as follows. Catalyzes carboxymethyl transfer from carboxy-S-adenosyl-L-methionine (Cx-SAM) to 5-hydroxyuridine (ho5U) to form 5-carboxymethoxyuridine (cmo5U) at position 34 in tRNAs. This chain is tRNA U34 carboxymethyltransferase, found in Desulfotalea psychrophila (strain LSv54 / DSM 12343).